The primary structure comprises 355 residues: Holliday junction branch migration complex subunit RuvB (355 aa).

Positions Thr-4 to Tyr-190 are large ATPase domain (RuvB-L). ATP is bound by residues Leu-29, Arg-30, Gly-71, Lys-74, Thr-75, Thr-76, Glu-137–Tyr-139, Arg-180, Tyr-190, and Arg-227. Mg(2+) is bound at residue Thr-75. The interval Asp-191–Asp-261 is small ATPAse domain (RuvB-S). Residues Pro-264 to Lys-355 form a head domain (RuvB-H) region. 3 residues coordinate DNA: Arg-300, Arg-319, and Arg-324.

The protein belongs to the RuvB family. Homohexamer. Forms an RuvA(8)-RuvB(12)-Holliday junction (HJ) complex. HJ DNA is sandwiched between 2 RuvA tetramers; dsDNA enters through RuvA and exits via RuvB. An RuvB hexamer assembles on each DNA strand where it exits the tetramer. Each RuvB hexamer is contacted by two RuvA subunits (via domain III) on 2 adjacent RuvB subunits; this complex drives branch migration. In the full resolvosome a probable DNA-RuvA(4)-RuvB(12)-RuvC(2) complex forms which resolves the HJ.

The protein resides in the cytoplasm. It catalyses the reaction ATP + H2O = ADP + phosphate + H(+). Functionally, the RuvA-RuvB-RuvC complex processes Holliday junction (HJ) DNA during genetic recombination and DNA repair, while the RuvA-RuvB complex plays an important role in the rescue of blocked DNA replication forks via replication fork reversal (RFR). RuvA specifically binds to HJ cruciform DNA, conferring on it an open structure. The RuvB hexamer acts as an ATP-dependent pump, pulling dsDNA into and through the RuvAB complex. RuvB forms 2 homohexamers on either side of HJ DNA bound by 1 or 2 RuvA tetramers; 4 subunits per hexamer contact DNA at a time. Coordinated motions by a converter formed by DNA-disengaged RuvB subunits stimulates ATP hydrolysis and nucleotide exchange. Immobilization of the converter enables RuvB to convert the ATP-contained energy into a lever motion, pulling 2 nucleotides of DNA out of the RuvA tetramer per ATP hydrolyzed, thus driving DNA branch migration. The RuvB motors rotate together with the DNA substrate, which together with the progressing nucleotide cycle form the mechanistic basis for DNA recombination by continuous HJ branch migration. Branch migration allows RuvC to scan DNA until it finds its consensus sequence, where it cleaves and resolves cruciform DNA. This Burkholderia ambifaria (strain ATCC BAA-244 / DSM 16087 / CCUG 44356 / LMG 19182 / AMMD) (Burkholderia cepacia (strain AMMD)) protein is Holliday junction branch migration complex subunit RuvB.